The primary structure comprises 182 residues: Plasmolipin (182 aa).

Positions 1–20 (MAEFPSKVNTRTSSPAQGGG) are disordered. The Cytoplasmic portion of the chain corresponds to 1–35 (MAEFPSKVNTRTSSPAQGGGAVVSTLSPDLGFVRS). Residues 7 to 16 (KVNTRTSSPA) show a composition bias toward polar residues. An MARVEL domain is found at 32 to 166 (FVRSSLGALM…SAFLSFQAWR (135 aa)). A helical transmembrane segment spans residues 36–56 (SLGALMLLQLVLGLLVWALIA). At 57 to 68 (DTPYHLYPSYGW) the chain is on the extracellular side. A helical membrane pass occupies residues 69–89 (VMFVAVFLWLVTIIFFVLYLF). Residues 90 to 99 (QLHMKLYMVP) are Cytoplasmic-facing. A helical membrane pass occupies residues 100–120 (WPLVLMVFNVGATVLYITAFI). At 121–141 (TCSASVELTSLKGSQPYNQRA) the chain is on the extracellular side. Residues 142–162 (AASFFSCLVMIAYGVSAFLSF) traverse the membrane as a helical segment. The Cytoplasmic segment spans residues 163-182 (QAWRGVGSNAATSQMAGGYA).

It belongs to the MAL family. Forms oligomers. Phosphorylated.

The protein resides in the cell membrane. It is found in the myelin membrane. Its subcellular location is the apical cell membrane. In terms of biological role, main component of the myelin sheath that plays an important role in myelin membrane biogenesis and myelination. Plays an essential function in apical endocytosis. Regulates epithelial development through the regulation of apical endocytosis. Part of the intracellular machinery that mediates basolateral-to-apical transport of ICAM-1, an essential adhesion receptor in epithelial cells, from the subapical compartment in hepatic epithelial cells. This Bos taurus (Bovine) protein is Plasmolipin (PLLP).